The primary structure comprises 120 residues: Seripauperin-4 (120 aa).

Residues 7-24 (IAAGVAAIAATASATTTI) form a helical membrane-spanning segment.

It belongs to the SRP1/TIP1 family. Seripauperin subfamily.

It localises to the membrane. The sequence is that of Seripauperin-4 (PAU4) from Saccharomyces cerevisiae (strain ATCC 204508 / S288c) (Baker's yeast).